The following is a 189-amino-acid chain: Flavin prenyltransferase UbiX (189 aa).

FMN-binding positions include 10-12, Ser-37, 88-91, and Arg-123; these read GAS and SIKT. Dimethylallyl phosphate contacts are provided by Tyr-153 and Arg-169.

This sequence belongs to the UbiX/PAD1 family.

The enzyme catalyses dimethylallyl phosphate + FMNH2 = prenylated FMNH2 + phosphate. The protein operates within cofactor biosynthesis; ubiquinone biosynthesis. Functionally, flavin prenyltransferase that catalyzes the synthesis of the prenylated FMN cofactor (prenyl-FMN) for 4-hydroxy-3-polyprenylbenzoic acid decarboxylase UbiD. The prenyltransferase is metal-independent and links a dimethylallyl moiety from dimethylallyl monophosphate (DMAP) to the flavin N5 and C6 atoms of FMN. In Escherichia coli O157:H7, this protein is Flavin prenyltransferase UbiX.